Here is a 359-residue protein sequence, read N- to C-terminus: Apelin receptor B (359 aa).

Over 1–36 (MNAMDNMTADYSPDYFDDAVNSSMCEYDEWEPSYSL) the chain is Extracellular. Residues Asn-6 and Asn-21 are each glycosylated (N-linked (GlcNAc...) asparagine). Cystine bridges form between Cys-25/Cys-288 and Cys-107/Cys-186. Residues 37-57 (IPVLYMLIFILGLTGNGVVIF) form a helical membrane-spanning segment. Residues 58-75 (TVWRAQSKRRAADVYIGN) are Cytoplasmic-facing. Residues 76–96 (LALADLTFVVTLPLWAVYTAL) traverse the membrane as a helical segment. Over 97–108 (GYHWPFGVALCK) the chain is Extracellular. Residues 109-129 (ISSYVVLLNMYASVFCLTCLS) traverse the membrane as a helical segment. The Cytoplasmic segment spans residues 130-151 (LDRYMAIVHSLTSTQLRTRGHM). Residues 152 to 172 (RASLTAIWLLSGVLAAPTLLF) traverse the membrane as a helical segment. The Extracellular segment spans residues 173-213 (RTTVYDVETNRTSCAMDFNLVVSQPGQETYWIAGLSISSTA). Asn-182 carries N-linked (GlcNAc...) asparagine glycosylation. A helical transmembrane segment spans residues 214–234 (LGFLIPLLAMMVCYGFIGCTV). At 235–251 (TRHFNSLRKEDQRKRRL) the chain is on the cytoplasmic side. The helical transmembrane segment at 252–272 (LKIITTLVVVFAACWMPFHVV) threads the bilayer. At 273–286 (KTMDALSYLNLAPD) the chain is on the extracellular side. A helical membrane pass occupies residues 287–307 (SCTFLNLLLLAHPYATCLAYV). Topologically, residues 308–359 (NSCLNPLLYAFFDLRFRSQCLCLLNLKKALHASPASSLSSQKTEAQSLATKV) are cytoplasmic.

Belongs to the G-protein coupled receptor 1 family. As to expression, mesendodermal expression at the blastoderm margin appears by 4.5 hpf. At early gastrulation, expression is maintained ventrolaterally while expression in dorsal cells and random deep cells declines. During gastrulation and segmentation, expression is maintained in adaxial, intermediate, and lateral plate mesoderm. During late segmentation, expressed in several regions including the forming heart. By 24 hpf, expressed in the dorsal aorta, caudal vein, and intersomitic blood vessels.

The protein localises to the cell membrane. Its function is as follows. G protein-coupled receptor for peptide hormones apelin (apln) and apelin receptor early endogenous ligand (apela), that plays a role in the regulation of normal cardiovascular function and fluid homeostasis. When acting as apelin receptor, activates both G(i) protein pathway that inhibits adenylate cyclase activity, and the beta-arrestin pathway that promotes internalization of the receptor. Also functions as mechanoreceptor that is activated by pathological stimuli in a G-protein-independent fashion to induce beta-arrestin signaling, hence eliciting cardiac hypertrophy. However, the presence of apelin ligand blunts cardiac hypertrophic induction from APLNR/APJ on response to pathological stimuli. Plays a key role in early development such as gastrulation, blood vessels formation and heart morphogenesis by acting as a receptor for apela hormone, promoting endoderm and mesendoderm cell migration and regulating the migration of cells fated to become myocardial progenitors, respectively. Positively regulates angioblast migration toward the embryonic midline, i.e. the position of the future vessel formation, during vasculogenesis. May promote sinus venosus (SV)-derived endothelial cells migration into the developing heart to promote coronary blood vessel development. Required for cardiovascular development, particularly for intersomitic vein angiogenesis by acting as a receptor for apln hormone. Plays a role in various processes in adults such as regulation of blood vessel formation, blood pressure, heart contractility and heart failure. Acts redundantly with agtrl1a in heart development. G protein-coupled receptor for peptide hormones apelin (APLN) and apelin receptor early endogenous ligand (APELA/ELA), that plays a role in the regulation of normal cardiovascular function and fluid homeostasis. When acting as apelin receptor, activates both G(i) protein pathway that inhibits adenylate cyclase activity, and the beta-arrestin pathway that promotes internalization of the receptor. APLNR/APJ also functions as mechanoreceptor that is activated by pathological stimuli in a G-protein-independent fashion to induce beta-arrestin signaling, hence eliciting cardiac hypertrophy. Plays a key role in early development such as gastrulation, blood vessels formation and heart morphogenesis by acting as a APELA receptor. May promote angioblast migration toward the embryonic midline, i.e. the position of the future vessel formation, during vasculogenesis. Promotes sinus venosus (SV)-derived endothelial cells migration into the developing heart to promote coronary blood vessel development. Also plays a role in various processes in adults such as regulation of blood vessel formation, blood pressure, heart contractility and heart failure. The chain is Apelin receptor B (aplnrb) from Danio rerio (Zebrafish).